The chain runs to 360 residues: Heme A synthase (360 aa).

5 helical membrane passes run 13 to 33 (AVRWWLISVAALIALMVLVGG), 99 to 119 (LLGRFIGVAYLLPFLFFLWRG), 129 to 149 (LWLLFALGGLQGAVGWWMVAS), 160 to 180 (YRLATHLVLALLIFAGIVWTV), and 199 to 219 (SALLLVVTFVQIYLGALVAGL). His263 serves as a coordination point for heme. Helical transmembrane passes span 265-282 (MTAYALFVLAALHAFDAV), 292-312 (GALWLFAAVSLQAVLGILTLL), and 315-335 (VPIGLALAHQAVAIAVLTLAV). A heme-binding site is contributed by His323.

It belongs to the COX15/CtaA family. Type 2 subfamily. In terms of assembly, interacts with CtaB. Requires heme b as cofactor.

The protein resides in the cell membrane. It catalyses the reaction Fe(II)-heme o + 2 A + H2O = Fe(II)-heme a + 2 AH2. Its pathway is porphyrin-containing compound metabolism; heme A biosynthesis; heme A from heme O: step 1/1. Its function is as follows. Catalyzes the conversion of heme O to heme A by two successive hydroxylations of the methyl group at C8. The first hydroxylation forms heme I, the second hydroxylation results in an unstable dihydroxymethyl group, which spontaneously dehydrates, resulting in the formyl group of heme A. This Bradyrhizobium diazoefficiens (strain JCM 10833 / BCRC 13528 / IAM 13628 / NBRC 14792 / USDA 110) protein is Heme A synthase.